The sequence spans 215 residues: Transmembrane protein 267 (215 aa).

3 helical membrane passes run Phe-77–Leu-97, Pro-114–Leu-134, and Tyr-178–Leu-198.

The protein resides in the membrane. This Xenopus laevis (African clawed frog) protein is Transmembrane protein 267 (tmem267).